Consider the following 302-residue polypeptide: Aspartate carbamoyltransferase catalytic subunit (302 aa).

Residues arginine 49 and threonine 50 each contribute to the carbamoyl phosphate site. Lysine 77 is an L-aspartate binding site. Arginine 99, histidine 126, and glutamine 129 together coordinate carbamoyl phosphate. L-aspartate is bound by residues arginine 159 and arginine 209. Carbamoyl phosphate is bound by residues alanine 250 and proline 251.

This sequence belongs to the aspartate/ornithine carbamoyltransferase superfamily. ATCase family. Heterododecamer (2C3:3R2) of six catalytic PyrB chains organized as two trimers (C3), and six regulatory PyrI chains organized as three dimers (R2).

The enzyme catalyses carbamoyl phosphate + L-aspartate = N-carbamoyl-L-aspartate + phosphate + H(+). The protein operates within pyrimidine metabolism; UMP biosynthesis via de novo pathway; (S)-dihydroorotate from bicarbonate: step 2/3. In terms of biological role, catalyzes the condensation of carbamoyl phosphate and aspartate to form carbamoyl aspartate and inorganic phosphate, the committed step in the de novo pyrimidine nucleotide biosynthesis pathway. The sequence is that of Aspartate carbamoyltransferase catalytic subunit from Staphylococcus carnosus (strain TM300).